The primary structure comprises 265 residues: Secreted RxLR effector protein 16 (265 aa).

The N-terminal stretch at 1–19 (MRGAFYIAIALLIVRSRTA) is a signal peptide. The RxLR-dEER signature appears at 46–61 (RYLRGGLALSATNEER). N-linked (GlcNAc...) asparagine glycosylation is found at Asn-170, Asn-219, and Asn-240.

The protein belongs to the RxLR effector family. N-glycosylated. The putative N-glycosylation site at position 240 is essential for cell death-inducing activity.

Its subcellular location is the secreted. The protein localises to the host nucleus. Effector that acts as an elicitor that induces cell death and promotes ROS accumulation in Nicotian benthamiana. RxLR16-triggered cell death is dependent on SGT1, HSP90 and RAR1, but independent of the somatic embryogenesis receptor-like kinase SERK3/BAK1, indicating that it acts independently of the detection of cell surface pattern recognition receptors. Enhances the expressional levels of defense-associated genes involved in the salicylic acid-, jasmonate acid-, and ethylene-mediated signal transduction, resulting in disease resistance. However, as some other Plasmopara viticola RxLR effectors including RxLR1, RxLR10, RxLR30 and RxLR25, can suppress defense responses and disease resistance induced by RxLR16, it may not trigger host cell death or immune responses during physiological infection under natural conditions. The protein is Secreted RxLR effector protein 16 of Plasmopara viticola (Downy mildew of grapevine).